We begin with the raw amino-acid sequence, 216 residues long: Large ribosomal subunit protein bL25 (216 aa).

The tract at residues 191-216 is disordered; it reads LVSAESEEDEDAPAADEVPATEVSEE. Over residues 195 to 204 the composition is skewed to acidic residues; it reads ESEEDEDAPA.

The protein belongs to the bacterial ribosomal protein bL25 family. CTC subfamily. Part of the 50S ribosomal subunit; part of the 5S rRNA/L5/L18/L25 subcomplex. Contacts the 5S rRNA. Binds to the 5S rRNA independently of L5 and L18.

Its function is as follows. This is one of the proteins that binds to the 5S RNA in the ribosome where it forms part of the central protuberance. This chain is Large ribosomal subunit protein bL25, found in Jannaschia sp. (strain CCS1).